Reading from the N-terminus, the 101-residue chain is MFQQLNCTNISSLLFLVSLLGIFLNQKNILVMLMSLEMMFLSISFNLIFSSIRLDDIIGQIFSLLILTVAAAESSIGLAILVIYYRIRSTITVELMNLMKG.

A run of 3 helical transmembrane segments spans residues 5–25, 29–49, and 64–84; these read LNCTNISSLLFLVSLLGIFLN, ILVMLMSLEMMFLSISFNLIF, and LLILTVAAAESSIGLAILVIY.

This sequence belongs to the complex I subunit 4L family.

It localises to the mitochondrion membrane. The enzyme catalyses a ubiquinone + NADH + 5 H(+)(in) = a ubiquinol + NAD(+) + 4 H(+)(out). In terms of biological role, core subunit of the mitochondrial membrane respiratory chain NADH dehydrogenase (Complex I) that is believed to belong to the minimal assembly required for catalysis. Complex I functions in the transfer of electrons from NADH to the respiratory chain. The immediate electron acceptor for the enzyme is believed to be ubiquinone. The chain is NADH-ubiquinone oxidoreductase chain 4L (ND4L) from Chondrus crispus (Carrageen Irish moss).